Here is a 297-residue protein sequence, read N- to C-terminus: tRNA dimethylallyltransferase (297 aa).

8–15 serves as a coordination point for ATP; sequence GATASGKS. Residue 10-15 coordinates substrate; that stretch reads TASGKS. Residues 33 to 36 are interaction with substrate tRNA; that stretch reads DSLS.

It belongs to the IPP transferase family. In terms of assembly, monomer. Requires Mg(2+) as cofactor.

The enzyme catalyses adenosine(37) in tRNA + dimethylallyl diphosphate = N(6)-dimethylallyladenosine(37) in tRNA + diphosphate. In terms of biological role, catalyzes the transfer of a dimethylallyl group onto the adenine at position 37 in tRNAs that read codons beginning with uridine, leading to the formation of N6-(dimethylallyl)adenosine (i(6)A). In Sulfurimonas denitrificans (strain ATCC 33889 / DSM 1251) (Thiomicrospira denitrificans (strain ATCC 33889 / DSM 1251)), this protein is tRNA dimethylallyltransferase.